Reading from the N-terminus, the 654-residue chain is Periplasmic beta-glucosidase/beta-xylosidase (654 aa).

Residues 1–25 (MEKSATRQKALLIALPLLFSPLASA) form the signal peptide. Residues Asp-235 and Asp-360 contribute to the active site.

Belongs to the glycosyl hydrolase 3 family.

It localises to the periplasm. The catalysed reaction is Hydrolysis of terminal, non-reducing beta-D-glucosyl residues with release of beta-D-glucose.. It catalyses the reaction Hydrolysis of (1-&gt;4)-beta-D-xylans, to remove successive D-xylose residues from the non-reducing termini.. In terms of biological role, exhibits both beta-glucosidase and beta-xylosidase activities. In Dickeya chrysanthemi (Pectobacterium chrysanthemi), this protein is Periplasmic beta-glucosidase/beta-xylosidase (bgxA).